The sequence spans 93 residues: Small ribosomal subunit protein uS19 (93 aa).

This sequence belongs to the universal ribosomal protein uS19 family.

Its function is as follows. Protein S19 forms a complex with S13 that binds strongly to the 16S ribosomal RNA. This is Small ribosomal subunit protein uS19 from Pseudarthrobacter chlorophenolicus (strain ATCC 700700 / DSM 12829 / CIP 107037 / JCM 12360 / KCTC 9906 / NCIMB 13794 / A6) (Arthrobacter chlorophenolicus).